The primary structure comprises 112 residues: T cell receptor alpha variable 12-1 (112 aa).

Residues 1–20 form the signal peptide; it reads MISLRVLLVILWLQLSWVWS. The Ig-like domain maps to 23 to 112; sequence KEVEQDPGPF…DSATYLCVVN (90 aa). Residue Asn43 is glycosylated (N-linked (GlcNAc...) asparagine). An intrachain disulfide couples Cys44 to Cys109.

Alpha-beta TR is a heterodimer composed of an alpha and beta chain; disulfide-linked. The alpha-beta TR is associated with the transmembrane signaling CD3 coreceptor proteins to form the TR-CD3 (TcR or TCR). The assembly of alpha-beta TR heterodimers with CD3 occurs in the endoplasmic reticulum where a single alpha-beta TR heterodimer associates with one CD3D-CD3E heterodimer, one CD3G-CD3E heterodimer and one CD247 homodimer forming a stable octameric structure. CD3D-CD3E and CD3G-CD3E heterodimers preferentially associate with TR alpha and TR beta chains, respectively. The association of the CD247 homodimer is the last step of TcR assembly in the endoplasmic reticulum and is required for transport to the cell surface.

Its subcellular location is the cell membrane. V region of the variable domain of T cell receptor (TR) alpha chain that participates in the antigen recognition. Alpha-beta T cell receptors are antigen specific receptors which are essential to the immune response and are present on the cell surface of T lymphocytes. Recognize peptide-major histocompatibility (MH) (pMH) complexes that are displayed by antigen presenting cells (APC), a prerequisite for efficient T cell adaptive immunity against pathogens. Binding of alpha-beta TR to pMH complex initiates TR-CD3 clustering on the cell surface and intracellular activation of LCK that phosphorylates the ITAM motifs of CD3G, CD3D, CD3E and CD247 enabling the recruitment of ZAP70. In turn ZAP70 phosphorylates LAT, which recruits numerous signaling molecules to form the LAT signalosome. The LAT signalosome propagates signal branching to three major signaling pathways, the calcium, the mitogen-activated protein kinase (MAPK) kinase and the nuclear factor NF-kappa-B (NF-kB) pathways, leading to the mobilization of transcription factors that are critical for gene expression and essential for T cell growth and differentiation. The T cell repertoire is generated in the thymus, by V-(D)-J rearrangement. This repertoire is then shaped by intrathymic selection events to generate a peripheral T cell pool of self-MH restricted, non-autoaggressive T cells. Post-thymic interaction of alpha-beta TR with the pMH complexes shapes TR structural and functional avidity. In Homo sapiens (Human), this protein is T cell receptor alpha variable 12-1.